The chain runs to 542 residues: CTP synthase (542 aa).

The interval 1 to 265 (MARYVFITGG…DDEVLAAFGI (265 aa)) is amidoligase domain. Residue serine 13 coordinates CTP. Serine 13 contacts UTP. ATP-binding positions include 14 to 19 (SLGKGI) and aspartate 71. Mg(2+) is bound by residues aspartate 71 and glutamate 139. Residues 146–148 (DIE), 186–191 (KTKPTQ), and lysine 222 contribute to the CTP site. UTP-binding positions include 186–191 (KTKPTQ) and lysine 222. Residues 291–541 (TIAIVGKYTG…IEAATEQSRL (251 aa)) enclose the Glutamine amidotransferase type-1 domain. Residue glycine 353 participates in L-glutamine binding. The active-site Nucleophile; for glutamine hydrolysis is cysteine 380. L-glutamine-binding positions include 381-384 (FGMQ), glutamate 404, and arginine 469. Residues histidine 514 and glutamate 516 contribute to the active site.

Belongs to the CTP synthase family. As to quaternary structure, homotetramer.

It catalyses the reaction UTP + L-glutamine + ATP + H2O = CTP + L-glutamate + ADP + phosphate + 2 H(+). The catalysed reaction is L-glutamine + H2O = L-glutamate + NH4(+). The enzyme catalyses UTP + NH4(+) + ATP = CTP + ADP + phosphate + 2 H(+). Its pathway is pyrimidine metabolism; CTP biosynthesis via de novo pathway; CTP from UDP: step 2/2. Allosterically activated by GTP, when glutamine is the substrate; GTP has no effect on the reaction when ammonia is the substrate. The allosteric effector GTP functions by stabilizing the protein conformation that binds the tetrahedral intermediate(s) formed during glutamine hydrolysis. Inhibited by the product CTP, via allosteric rather than competitive inhibition. Its function is as follows. Catalyzes the ATP-dependent amination of UTP to CTP with either L-glutamine or ammonia as the source of nitrogen. Regulates intracellular CTP levels through interactions with the four ribonucleotide triphosphates. The protein is CTP synthase of Rhizobium etli (strain CIAT 652).